The primary structure comprises 474 residues: Equilibrative nucleoside transporter 3 (474 aa).

Residues Met-1–Thr-53 lie on the Cytoplasmic side of the membrane. Phosphoserine occurs at positions 21 and 23. The short motif at Leu-31–Leu-32 is the Dileucine internalization motif element. Residues Tyr-54–Ala-74 traverse the membrane as a helical segment. The Extracellular portion of the chain corresponds to Gln-75–Ser-105. N-linked (GlcNAc...) asparagine glycosylation occurs at Asn-84. A helical membrane pass occupies residues Tyr-106–Val-126. The Cytoplasmic portion of the chain corresponds to Asn-127 to Arg-134. Residues Val-135–Val-155 form a helical membrane-spanning segment. The Extracellular portion of the chain corresponds to Asp-156–Thr-161. The helical transmembrane segment at His-162–Phe-182 threads the bilayer. The Cytoplasmic segment spans residues Asn-183–Leu-201. A helical membrane pass occupies residues Ile-202–Val-222. Residues Ala-223 to Thr-230 are Extracellular-facing. Residues Leu-231–Leu-251 form a helical membrane-spanning segment. Over Pro-252–Thr-305 the chain is Cytoplasmic. Residues Glu-272 to Thr-294 form a disordered region. Positions Pro-276–Pro-292 are enriched in polar residues. A helical transmembrane segment spans residues Gly-306–Cys-326. Over Thr-327 to Pro-339 the chain is Extracellular. The chain crosses the membrane as a helical span at residues Trp-340–Ala-357. The Cytoplasmic segment spans residues Asp-358–Lys-376. A helical transmembrane segment spans residues Ala-377–Tyr-397. Topologically, residues Gln-398–Pro-414 are extracellular. A helical transmembrane segment spans residues Val-415–Tyr-435. Topologically, residues Gly-436–Thr-453 are cytoplasmic. A helical transmembrane segment spans residues Phe-454–Ile-474.

This sequence belongs to the SLC29A/ENT transporter (TC 2.A.57) family.

It is found in the lysosome membrane. The protein localises to the late endosome membrane. The protein resides in the mitochondrion membrane. Its subcellular location is the cell membrane. The enzyme catalyses adenosine(in) = adenosine(out). The catalysed reaction is guanosine(in) = guanosine(out). It catalyses the reaction inosine(in) = inosine(out). It carries out the reaction uridine(out) = uridine(in). The enzyme catalyses cytidine(in) = cytidine(out). The catalysed reaction is thymidine(in) = thymidine(out). It catalyses the reaction 2'-deoxyadenosine(in) = 2'-deoxyadenosine(out). It carries out the reaction 2'-deoxycytidine(in) = 2'-deoxycytidine(out). The enzyme catalyses guanine(out) = guanine(in). The catalysed reaction is uracil(in) = uracil(out). It catalyses the reaction (R)-noradrenaline(out) = (R)-noradrenaline(in). It carries out the reaction dopamine(out) = dopamine(in). The enzyme catalyses serotonin(out) = serotonin(in). The catalysed reaction is tyramine(in) = tyramine(out). It catalyses the reaction ATP(in) = ATP(out). Its function is as follows. Uniporter that mediates the facilitative transport of nucleoside across lysosomal and mitochondrial membranes. Functions as a non-electrogenic Na(+)-independent transporter. Substrate transport is pH-dependent and enhanced under acidic condition, probably reflecting the location of the transporter in acidic intracellular compartments. Proton is not a cotransporting ion but most likely change the ionization state of the transporter which dictates transport-permissible/impermissible conformation for nucleoside translocation. May direct the nucleoside transport from lysosomes to cytosol or cytosol to mitochondria to facilitate the fundamental function of salvage synthesis of nucleic acids. Involved in the transport of nucleosides (adenosine, guanosine, uridine, thymidine, cytidine and inosine) and deoxynucleosides (deoxyadenosine, deoxycytidine). Also mediates transport of purine nucleobases (adenine, guanine) and pyrimidine nucleobases (uracil). Also able to transport monoamine neurotransmitters dopamine, serotonin, noradrenaline and tyramine. Capable of transporting ATP. Mediates nucleoside export from lysosomes in macrophages, which regulates macrophage functions and numbers. This Bos taurus (Bovine) protein is Equilibrative nucleoside transporter 3 (SLC29A3).